Consider the following 20-residue polypeptide: Unknown protein NF003 from 2D-PAGE (20 aa).

The protein is Unknown protein NF003 from 2D-PAGE of Naegleria fowleri (Brain eating amoeba).